A 582-amino-acid polypeptide reads, in one-letter code: Colicin-E9 (582 aa).

5 disordered regions span residues Met-1–Gly-74, Ser-246–Asp-270, Pro-294–Glu-321, Ala-422–Lys-489, and Ser-510–Gly-542. Positions Ile-20–Asp-35 are enriched in gly residues. The segment covering Gly-36–Pro-45 has biased composition (low complexity). The span at Trp-46–Gly-74 shows a compositional bias: gly residues. 3 stretches are compositionally biased toward basic and acidic residues: residues Val-297–Glu-321, Gln-430–Arg-453, and Pro-465–Lys-476. A compositionally biased stretch (low complexity) spans Ser-516–Lys-529. Positions 550, 575, and 579 each coordinate Zn(2+).

This sequence belongs to the colicin/pyosin nuclease family.

Its function is as follows. This plasmid-coded bactericidal protein is an endonuclease active on both single- and double-stranded DNA but with undefined specificity. Functionally, colicins are polypeptide toxins produced by and active against E.coli and closely related bacteria. In Escherichia coli, this protein is Colicin-E9 (col).